Here is a 571-residue protein sequence, read N- to C-terminus: MRALRDRAGLLLCVLLLAALLEAALGLPVKKPRLRGPRPGSLTRLAEVSASPDPRPLKEEEEAPLLPRTHLQAEPHQHGCWTVTEPAAMTPGNATPPRTPEVTPLRLELQKLPGLANTTLSTPNPDTQASASPDPRPLREEEEARLLPRTHLQAELHQHGCWTVTEPAALTPGNATPPRTQEVTPLLLELQKLPELVHATLSTPNPDNQVTIKVVEDPQAEVSIDLLAEPSNPPPQDTLSWLPALWSFLWGDYKGEEKDRAPGEKGEEKEEDEDYPSEDIEGEDQEDKEEDEEEQALWFNGTTDNWDQGWLAPGDWVFKDSVSYDYEPQKEWSPWSPCSGNCSTGKQQRTRPCGYGCTATETRTCDLPSCPGTEDKDTLGLPSEEWKLLARNATDMHDQDVDSCEKWLNCKSDFLIKYLSQMLRDLPSCPCAYPLEAMDSPVSLQDEHQGRSFRWRDASGPRERLDIYQPTARFCLRSMLSGESSTLAAQHCCYDEDSRLLTRGKGAGMPNLISTDFSPKLHFKFDTTPWILCKGDWSRLHAVLPPNNGRACTDNPLEEEYLAQLQEAKEY.

The N-terminal stretch at 1–26 (MRALRDRAGLLLCVLLLAALLEAALG) is a signal peptide. Disordered stretches follow at residues 30–60 (KKPR…LKEE), 116–141 (ANTT…LREE), and 257–294 (EKDR…DEEE). The segment covering 116 to 131 (ANTTLSTPNPDTQASA) has biased composition (polar residues). The N-linked (GlcNAc...) asparagine glycan is linked to Asn-117. A compositionally biased stretch (basic and acidic residues) spans 257 to 268 (EKDRAPGEKGEE). Over residues 269–294 (KEEDEDYPSEDIEGEDQEDKEEDEEE) the composition is skewed to acidic residues. Asn-300 is a glycosylation site (N-linked (GlcNAc...) asparagine). The TSP type-1 domain occupies 327-371 (EPQKEWSPWSPCSGNCSTGKQQRTRPCGYGCTATETRTCDLPSCP). 3 disulfides stabilise this stretch: Cys-338/Cys-365, Cys-342/Cys-370, and Cys-353/Cys-357. Asn-392 is a glycosylation site (N-linked (GlcNAc...) asparagine). One can recognise an AMOP domain in the interval 396–559 (MHDQDVDSCE…RACTDNPLEE (164 aa)).

Belongs to the isthmin family. As to expression, expressed at high levels in the placenta and at moderate levels in the pancreas, kidney, heart, liver, lung, brain and skeletal muscle.

It localises to the secreted. The protein is Isthmin-2 (ISM2) of Homo sapiens (Human).